A 77-amino-acid polypeptide reads, in one-letter code: Translation initiation factor IF-1, chloroplastic (77 aa).

An S1-like domain is found at 1-71; sequence MKEQKLIHEG…TRGRIIYRLR (71 aa).

It belongs to the IF-1 family. As to quaternary structure, component of the 30S ribosomal translation pre-initiation complex which assembles on the 30S ribosome in the order IF-2 and IF-3, IF-1 and N-formylmethionyl-tRNA(fMet); mRNA recruitment can occur at any time during PIC assembly.

It is found in the plastid. It localises to the chloroplast. Functionally, one of the essential components for the initiation of protein synthesis. Stabilizes the binding of IF-2 and IF-3 on the 30S subunit to which N-formylmethionyl-tRNA(fMet) subsequently binds. Helps modulate mRNA selection, yielding the 30S pre-initiation complex (PIC). Upon addition of the 50S ribosomal subunit IF-1, IF-2 and IF-3 are released leaving the mature 70S translation initiation complex. This Ceratophyllum demersum (Rigid hornwort) protein is Translation initiation factor IF-1, chloroplastic.